Consider the following 104-residue polypeptide: Probable monothiol glutaredoxin 2 (104 aa).

The 98-residue stretch at 7 to 104 folds into the Glutaredoxin domain; that stretch reads FEFIENEIKN…NGELEKMLKG (98 aa). Lys24 contributes to the glutathione binding site. A [2Fe-2S] cluster-binding site is contributed by Cys32. Residues Arg61, Phe73, and 86 to 87 contribute to the glutathione site; that span reads CD.

Belongs to the glutaredoxin family. Monothiol subfamily.

In Rickettsia felis (strain ATCC VR-1525 / URRWXCal2) (Rickettsia azadi), this protein is Probable monothiol glutaredoxin 2 (grxC2).